A 335-amino-acid polypeptide reads, in one-letter code: Dolichyl-diphosphooligosaccharide--protein glycosyltransferase subunit MAGT1 (335 aa).

An N-terminal signal peptide occupies residues 1 to 29; sequence MAAGWWFWCVSVTVAVALLIVCDVPSVSA. The Extracellular portion of the chain corresponds to 30-184; the sequence is QRKKEMVLSE…DVNIRVIRPP (155 aa). Residues 47-175 form the Thioredoxin domain; that stretch reads WTNKRPVIRM…IARWIADRTD (129 aa). The N-linked (GlcNAc...) asparagine glycan is linked to N71. A disulfide bridge connects residues C87 and C90. Residues 185–205 form a helical membrane-spanning segment; sequence NYAGPLMLGLLLAVIGGLVYL. Residues 206-209 lie on the Cytoplasmic side of the membrane; sequence RRSN. The chain crosses the membrane as a helical span at residues 210–230; it reads MEFLFNKTGWAFAALCFVLAM. Residues 231-270 are Extracellular-facing; sequence TSGQMWNHIRGPPYAHKNPHTGHVNYIHGSSQAQFVAETH. The chain crosses the membrane as a helical span at residues 271–291; that stretch reads IVLLFNGGVTLGMVLLCEAAT. Over 292 to 300 the chain is Cytoplasmic; sequence SDMDIGKRK. A helical transmembrane segment spans residues 301 to 321; that stretch reads IMCVAGIGLVVLFFSWMLSIF. Residues 322 to 335 lie on the Extracellular side of the membrane; sequence RSKYHGYPYSFLMS.

This sequence belongs to the OST3/OST6 family. As to quaternary structure, accessory component of the STT3B-containing form of the oligosaccharyltransferase (OST) complex. OST exists in two different complex forms which contain common core subunits RPN1, RPN2, OST48, OST4, DAD1 and TMEM258, either STT3A or STT3B as catalytic subunits, and form-specific accessory subunits. OST can form stable complexes with the Sec61 complex or with both the Sec61 and TRAP complexes. The association of TUSC3 or MAGT1 with the STT3B-containing complex seems to be mutually exclusvice.

The protein resides in the cell membrane. It localises to the endoplasmic reticulum. It is found in the endoplasmic reticulum membrane. Its pathway is protein modification; protein glycosylation. In terms of biological role, accessory component of the STT3B-containing form of the N-oligosaccharyl transferase (OST) complex which catalyzes the transfer of a high mannose oligosaccharide from a lipid-linked oligosaccharide donor to an asparagine residue within an Asn-X-Ser/Thr consensus motif in nascent polypeptide chains. Involved in N-glycosylation of STT3B-dependent substrates. Specifically required for the glycosylation of a subset of acceptor sites that are near cysteine residues; in this function seems to act redundantly with TUSC3. In its oxidized form proposed to form transient mixed disulfides with a glycoprotein substrate to facilitate access of STT3B to the unmodified acceptor site. Also has oxidoreductase-independent functions in the STT3B-containing OST complex possibly involving substrate recognition. Could indirectly play a role in Mg(2+) transport in epithelial cells. The protein is Dolichyl-diphosphooligosaccharide--protein glycosyltransferase subunit MAGT1 of Pongo abelii (Sumatran orangutan).